The primary structure comprises 259 residues: MADRSGHLAALILLGAAVCVAQPRGRILGGQEAKSHERPYMASVQVNGKHVCGGFLVSEQWVLSAAHCLEDVAEGKLQVLLGAHSLSQPEPSKRLYDVLRAVPHPDSQPDTIDHDLLLLKLSEKAELGPAVQPLAWQREDHEVPAGTLCDVAGWGVVSHTGRRPDRLQHLLLPVLDRTTCNLRTYHDGTITERMMCAESNRRDSCKGDSGGPLVCGGVAEGVVTSGSRVCGNRKKPGIYTRLASYVAWIDGVMADSAAA.

Positions 1–21 are cleaved as a signal peptide; it reads MADRSGHLAALILLGAAVCVA. Residues 22–26 constitute a propeptide, activation peptide; it reads QPRGR. Positions 27-254 constitute a Peptidase S1 domain; that stretch reads ILGGQEAKSH…YVAWIDGVMA (228 aa). The cysteines at positions 52 and 68 are disulfide-linked. Active-site charge relay system residues include His-67 and Asp-115. 3 disulfides stabilise this stretch: Cys-149–Cys-215, Cys-180–Cys-196, and Cys-205–Cys-230. The active-site Charge relay system is Ser-209. The segment at 224-228 is self-inhibitor loop; sequence TSGSR.

This sequence belongs to the peptidase S1 family. CFD is activated by the removal of 5 residues at the N-terminus, named activation peptide, by the MASP-3 isoform of MASP1.

It is found in the secreted. The enzyme catalyses Selective cleavage of Arg-|-Lys bond in complement factor B when in complex with complement subcomponent C3b or with cobra venom factor.. Circulates in plasma in a mature but self-inhibited form. Activated by factor B (CFB), which displaces the self-inhibition loop. Associates with CFB complexed with complement C3b. In terms of biological role, serine protease that initiates the alternative pathway of the complement system, a cascade of proteins that leads to phagocytosis and breakdown of pathogens and signaling that strengthens the adaptive immune system. In contrast to other complement pathways (classical, lectin and GZMK) that are directly activated by pathogens or antigen-antibody complexes, the alternative complement pathway is initiated by the spontaneous hydrolysis of complement C3. The alternative complement pathway acts as an amplification loop that enhances complement activation by mediating the formation of C3 and C5 convertases. Activated CFD cleaves factor B (CFB) when the latter is complexed with complement C3b, activating the C3 convertase of the alternative pathway. This Sus scrofa (Pig) protein is Complement factor D (CFD).